A 396-amino-acid chain; its full sequence is uncharacterized protein (396 aa).

[4Fe-4S] cluster-binding residues include Cys8, Cys14, Cys17, and Cys95. 4 residues coordinate S-adenosyl-L-methionine: Gln229, Tyr258, Glu279, and Asp325. Cys352 serves as the catalytic Nucleophile.

The protein belongs to the class I-like SAM-binding methyltransferase superfamily. RNA M5U methyltransferase family.

This is an uncharacterized protein from Chlamydia trachomatis serovar D (strain ATCC VR-885 / DSM 19411 / UW-3/Cx).